We begin with the raw amino-acid sequence, 177 residues long: Small ribosomal subunit protein uS5 (177 aa).

Residues 21-84 (LKEKMVSVNR…DEARQRMVRV (64 aa)) form the S5 DRBM domain.

This sequence belongs to the universal ribosomal protein uS5 family. Part of the 30S ribosomal subunit. Contacts proteins S4 and S8.

Its function is as follows. With S4 and S12 plays an important role in translational accuracy. In terms of biological role, located at the back of the 30S subunit body where it stabilizes the conformation of the head with respect to the body. The chain is Small ribosomal subunit protein uS5 from Nitrosomonas europaea (strain ATCC 19718 / CIP 103999 / KCTC 2705 / NBRC 14298).